Reading from the N-terminus, the 148-residue chain is 3-hydroxyacyl-[acyl-carrier-protein] dehydratase FabZ (148 aa).

His-48 is an active-site residue.

Belongs to the thioester dehydratase family. FabZ subfamily.

It is found in the cytoplasm. It catalyses the reaction a (3R)-hydroxyacyl-[ACP] = a (2E)-enoyl-[ACP] + H2O. Its function is as follows. Involved in unsaturated fatty acids biosynthesis. Catalyzes the dehydration of short chain beta-hydroxyacyl-ACPs and long chain saturated and unsaturated beta-hydroxyacyl-ACPs. The protein is 3-hydroxyacyl-[acyl-carrier-protein] dehydratase FabZ of Campylobacter curvus (strain 525.92).